The primary structure comprises 200 residues: Probable UbiX-like flavin prenyltransferase (200 aa).

FMN contacts are provided by residues 9–11 (GAT), Ser-36, 87–90 (SMKT), and Arg-122.

The protein belongs to the UbiX/PAD1 family. YclB subfamily. In terms of assembly, homododecamer.

The enzyme catalyses dimethylallyl phosphate + FMNH2 = prenylated FMNH2 + phosphate. Functionally, involved in the non-oxidative decarboxylation and detoxification of phenolic derivatives under both aerobic and anaerobic conditions. Flavin prenyltransferase that catalyzes the synthesis of the prenylated FMN cofactor (prenyl-FMN) for phenolic acid decarboxylase. The chain is Probable UbiX-like flavin prenyltransferase from Streptomyces sp. (strain D7).